Here is a 700-residue protein sequence, read N- to C-terminus: Polyribonucleotide nucleotidyltransferase (700 aa).

Asp-485 and Asp-491 together coordinate Mg(2+). The region spanning Pro-552 to Ile-611 is the KH domain. The S1 motif domain maps to Gly-621–Lys-689.

This sequence belongs to the polyribonucleotide nucleotidyltransferase family. As to quaternary structure, component of the RNA degradosome, which is a multiprotein complex involved in RNA processing and mRNA degradation. The cofactor is Mg(2+).

It localises to the cytoplasm. The catalysed reaction is RNA(n+1) + phosphate = RNA(n) + a ribonucleoside 5'-diphosphate. In terms of biological role, involved in mRNA degradation. Catalyzes the phosphorolysis of single-stranded polyribonucleotides processively in the 3'- to 5'-direction. In Shewanella baltica (strain OS155 / ATCC BAA-1091), this protein is Polyribonucleotide nucleotidyltransferase.